A 115-amino-acid polypeptide reads, in one-letter code: Large ribosomal subunit protein bL19 (115 aa).

This sequence belongs to the bacterial ribosomal protein bL19 family.

In terms of biological role, this protein is located at the 30S-50S ribosomal subunit interface and may play a role in the structure and function of the aminoacyl-tRNA binding site. This Koribacter versatilis (strain Ellin345) protein is Large ribosomal subunit protein bL19.